Reading from the N-terminus, the 118-residue chain is Large ribosomal subunit protein uL18 (118 aa).

Belongs to the universal ribosomal protein uL18 family. Part of the 50S ribosomal subunit; part of the 5S rRNA/L5/L18/L25 subcomplex. Contacts the 5S and 23S rRNAs.

In terms of biological role, this is one of the proteins that bind and probably mediate the attachment of the 5S RNA into the large ribosomal subunit, where it forms part of the central protuberance. In Rickettsia canadensis (strain McKiel), this protein is Large ribosomal subunit protein uL18.